Here is a 92-residue protein sequence, read N- to C-terminus: Small ribosomal subunit protein uS19c (92 aa).

It belongs to the universal ribosomal protein uS19 family.

Its subcellular location is the plastid. It localises to the chloroplast. Functionally, protein S19 forms a complex with S13 that binds strongly to the 16S ribosomal RNA. This is Small ribosomal subunit protein uS19c from Nymphaea alba (White water-lily).